The primary structure comprises 201 residues: Putative ferritin heavy polypeptide-like 19 (201 aa).

In terms of domain architecture, Ferritin-like diiron spans 1 to 123; that stretch reads MAFYFDQDDA…GYLSNLHKMG (123 aa).

This sequence belongs to the ferritin family.

The polypeptide is Putative ferritin heavy polypeptide-like 19 (FTH1P19) (Homo sapiens (Human)).